The following is a 241-amino-acid chain: NH(3)-dependent NAD(+) synthetase (241 aa).

Position 27 to 34 (27 to 34 (GISGGIDS)) interacts with ATP. Asp-33 is a Mg(2+) binding site. Arg-109 contacts deamido-NAD(+). Thr-129 serves as a coordination point for ATP. Residue Glu-134 participates in Mg(2+) binding. Deamido-NAD(+)-binding residues include Lys-142 and Asp-149. The ATP site is built by Lys-158 and Thr-180. 231–232 (HK) provides a ligand contact to deamido-NAD(+).

The protein belongs to the NAD synthetase family. Homodimer.

It catalyses the reaction deamido-NAD(+) + NH4(+) + ATP = AMP + diphosphate + NAD(+) + H(+). It participates in cofactor biosynthesis; NAD(+) biosynthesis; NAD(+) from deamido-NAD(+) (ammonia route): step 1/1. Its function is as follows. Catalyzes the ATP-dependent amidation of deamido-NAD to form NAD. Uses ammonia as a nitrogen source. The polypeptide is NH(3)-dependent NAD(+) synthetase (Thermoplasma acidophilum (strain ATCC 25905 / DSM 1728 / JCM 9062 / NBRC 15155 / AMRC-C165)).